We begin with the raw amino-acid sequence, 465 residues long: tRNA-2-methylthio-N(6)-dimethylallyladenosine synthase (465 aa).

The 121-residue stretch at 5–125 (RKLHIKSYGC…LPELLKRAGN (121 aa)) folds into the MTTase N-terminal domain. Residues cysteine 14, cysteine 50, cysteine 88, cysteine 166, cysteine 170, and cysteine 173 each contribute to the [4Fe-4S] cluster site. A Radical SAM core domain is found at 152-384 (RARGISAFVT…QELIDSQQSA (233 aa)). Residues 387-449 (KAAIGSTVDV…RYSFLGELVT (63 aa)) form the TRAM domain.

Belongs to the methylthiotransferase family. MiaB subfamily. Monomer. [4Fe-4S] cluster is required as a cofactor.

Its subcellular location is the cytoplasm. The catalysed reaction is N(6)-dimethylallyladenosine(37) in tRNA + (sulfur carrier)-SH + AH2 + 2 S-adenosyl-L-methionine = 2-methylsulfanyl-N(6)-dimethylallyladenosine(37) in tRNA + (sulfur carrier)-H + 5'-deoxyadenosine + L-methionine + A + S-adenosyl-L-homocysteine + 2 H(+). Functionally, catalyzes the methylthiolation of N6-(dimethylallyl)adenosine (i(6)A), leading to the formation of 2-methylthio-N6-(dimethylallyl)adenosine (ms(2)i(6)A) at position 37 in tRNAs that read codons beginning with uridine. This Bradyrhizobium diazoefficiens (strain JCM 10833 / BCRC 13528 / IAM 13628 / NBRC 14792 / USDA 110) protein is tRNA-2-methylthio-N(6)-dimethylallyladenosine synthase.